The chain runs to 247 residues: Coiled-coil domain-containing protein 124 homolog (247 aa).

The tract at residues 1 to 146 (MGGKKFGTNS…TTTTGSDDHE (146 aa)) is disordered. A coiled-coil region spans residues 8 to 85 (TNSKAEEARS…QEDKEIKERY (78 aa)). Over residues 11 to 114 (KAEEARSKKA…EQKQREKELA (104 aa)) the composition is skewed to basic and acidic residues. Residues 122–140 (VVVVPTTTTTTTTTTTTTT) show a composition bias toward low complexity.

Belongs to the CCDC124 family. Associates with translationally inactive ribosomes in the nonrotated state.

Functionally, ribosome-binding protein involved in ribosome hibernation: associates with translationally inactive ribosomes and stabilizes the nonrotated conformation of the 80S ribosome, thereby promoting ribosome preservation and storage. The sequence is that of Coiled-coil domain-containing protein 124 homolog from Dictyostelium discoideum (Social amoeba).